A 182-amino-acid chain; its full sequence is DOMON domain-containing protein Y73F4A.1 (182 aa).

The signal sequence occupies residues 1-18 (MFVLAIVFAFVFIPSSSS). The DOMON domain maps to 26–143 (ELVSMNWNVK…CLNWMVVPGG (118 aa)). N-linked (GlcNAc...) asparagine glycosylation is found at N47 and N128.

The protein resides in the secreted. The sequence is that of DOMON domain-containing protein Y73F4A.1 from Caenorhabditis elegans.